Reading from the N-terminus, the 515-residue chain is 2,3-bisphosphoglycerate-independent phosphoglycerate mutase (515 aa).

The Mn(2+) site is built by aspartate 14 and serine 64. Serine 64 serves as the catalytic Phosphoserine intermediate. Residues histidine 125, 155–156 (RD), arginine 187, arginine 193, 263–266 (RADR), and lysine 337 contribute to the substrate site. Positions 404, 408, 445, 446, and 464 each coordinate Mn(2+).

The protein belongs to the BPG-independent phosphoglycerate mutase family. In terms of assembly, monomer. It depends on Mn(2+) as a cofactor.

It catalyses the reaction (2R)-2-phosphoglycerate = (2R)-3-phosphoglycerate. It functions in the pathway carbohydrate degradation; glycolysis; pyruvate from D-glyceraldehyde 3-phosphate: step 3/5. Functionally, catalyzes the interconversion of 2-phosphoglycerate and 3-phosphoglycerate. The chain is 2,3-bisphosphoglycerate-independent phosphoglycerate mutase from Yersinia pseudotuberculosis serotype I (strain IP32953).